The chain runs to 389 residues: Dihydroorotase (389 aa).

Residues histidine 51 and histidine 53 each contribute to the Zn(2+) site. Residues 53–55 (HVR) and asparagine 85 contribute to the substrate site. The Zn(2+) site is built by lysine 133, histidine 158, histidine 193, and aspartate 256. An N6-carboxylysine modification is found at lysine 133. The active site involves aspartate 256. Substrate is bound by residues histidine 260 and 274–275 (PG).

It belongs to the metallo-dependent hydrolases superfamily. DHOase family. Class I DHOase subfamily. It depends on Zn(2+) as a cofactor.

The enzyme catalyses (S)-dihydroorotate + H2O = N-carbamoyl-L-aspartate + H(+). Its pathway is pyrimidine metabolism; UMP biosynthesis via de novo pathway; (S)-dihydroorotate from bicarbonate: step 3/3. In terms of biological role, catalyzes the reversible cyclization of carbamoyl aspartate to dihydroorotate. This is Dihydroorotase from Sulfolobus acidocaldarius (strain ATCC 33909 / DSM 639 / JCM 8929 / NBRC 15157 / NCIMB 11770).